Consider the following 49-residue polypeptide: uncharacterized protein (49 aa).

This is an uncharacterized protein from Enterobacteria phage T4 (Bacteriophage T4).